The primary structure comprises 600 residues: Aspartate--tRNA(Asp/Asn) ligase (600 aa).

E174 contributes to the L-aspartate binding site. The interval 198 to 201 is aspartate; that stretch reads QLFK. R220 serves as a coordination point for L-aspartate. Residues 220–222 and Q229 contribute to the ATP site; that span reads RDE. H457 is a binding site for L-aspartate. E491 is an ATP binding site. R498 serves as a coordination point for L-aspartate. 543-546 provides a ligand contact to ATP; sequence GLDR.

Belongs to the class-II aminoacyl-tRNA synthetase family. Type 1 subfamily. Homodimer.

It is found in the cytoplasm. The enzyme catalyses tRNA(Asx) + L-aspartate + ATP = L-aspartyl-tRNA(Asx) + AMP + diphosphate. Aspartyl-tRNA synthetase with relaxed tRNA specificity since it is able to aspartylate not only its cognate tRNA(Asp) but also tRNA(Asn). Reaction proceeds in two steps: L-aspartate is first activated by ATP to form Asp-AMP and then transferred to the acceptor end of tRNA(Asp/Asn). The protein is Aspartate--tRNA(Asp/Asn) ligase of Burkholderia vietnamiensis (strain G4 / LMG 22486) (Burkholderia cepacia (strain R1808)).